Consider the following 535-residue polypeptide: MNADREHQCDVLVIGSGAAGLSLALQVAQYGKVIVLSKGPRSEGATFYAQGGIAAVFDESDSIESHVQDTLIAGAGICDEQTVRFIAEHAKECVQWLIDGGVPFDKEEDSDNDHPRYHLTREGGHSHRRILHAADATGMAMQTSLQDNAHNHPNITVLERHNALDLITEDKIGGDANKVVGAYVWNRNAEHVETIRAKFVVLATGGASKVYQYTSNPDVSSGDGIAMAWRAGCRVANLEFNQFHPTCLYHPEARNFLLTEALRGEGAYLRRPDGSRFMPDFDERAELAPRDIVARAIDFEMKRLGADCMYLDISHKPADFIEKHFPTIYSRLMDLGIDMTKEPIPIVPAAHYTCGGVMVNPQGQTDLKQLYAIGEVSYTGLHGANRMASNSLLECVVYAWSASQDIIAQLPNASMPESLPAWDESQVTCSDEEVVLQHNWHELRLFMWDYMGIVRTNKRLERAMRRIQLLQQETHEYYSNFRVSNNLLEMRNLLQVAELMVRCAMQRKESRGLHYTLDYPDQLAESGPTILVPEK.

Residues 16 to 19, K38, 45 to 52, and D223 each bind FAD; these read SGAA and ATFYAQGG. Catalysis depends on R290, which acts as the Proton donor/acceptor. Residues E375 and 391–392 each bind FAD; that span reads SL.

The protein belongs to the FAD-dependent oxidoreductase 2 family. NadB subfamily. Requires FAD as cofactor.

It localises to the cytoplasm. The catalysed reaction is L-aspartate + O2 = iminosuccinate + H2O2. It participates in cofactor biosynthesis; NAD(+) biosynthesis; iminoaspartate from L-aspartate (oxidase route): step 1/1. Catalyzes the oxidation of L-aspartate to iminoaspartate, the first step in the de novo biosynthesis of NAD(+). This chain is L-aspartate oxidase (nadB), found in Vibrio cholerae serotype O1 (strain ATCC 39315 / El Tor Inaba N16961).